Consider the following 448-residue polypeptide: N-succinylarginine dihydrolase (448 aa).

Residues 19–28 (GGLSYGNVAS), Asn-110, and 137–138 (HR) contribute to the substrate site. Glu-174 is a catalytic residue. Residue Arg-214 participates in substrate binding. His-250 is a catalytic residue. Substrate-binding residues include Asp-252 and Asn-365. The active-site Nucleophile is the Cys-371.

Belongs to the succinylarginine dihydrolase family. In terms of assembly, homodimer.

It carries out the reaction N(2)-succinyl-L-arginine + 2 H2O + 2 H(+) = N(2)-succinyl-L-ornithine + 2 NH4(+) + CO2. The protein operates within amino-acid degradation; L-arginine degradation via AST pathway; L-glutamate and succinate from L-arginine: step 2/5. In terms of biological role, catalyzes the hydrolysis of N(2)-succinylarginine into N(2)-succinylornithine, ammonia and CO(2). This Pseudomonas fluorescens (strain SBW25) protein is N-succinylarginine dihydrolase.